A 418-amino-acid chain; its full sequence is Tryptophan synthase beta chain (418 aa).

Lys-109 carries the N6-(pyridoxal phosphate)lysine modification.

The protein belongs to the TrpB family. As to quaternary structure, tetramer of two alpha and two beta chains. Requires pyridoxal 5'-phosphate as cofactor.

The catalysed reaction is (1S,2R)-1-C-(indol-3-yl)glycerol 3-phosphate + L-serine = D-glyceraldehyde 3-phosphate + L-tryptophan + H2O. Its pathway is amino-acid biosynthesis; L-tryptophan biosynthesis; L-tryptophan from chorismate: step 5/5. In terms of biological role, the beta subunit is responsible for the synthesis of L-tryptophan from indole and L-serine. In Thermus thermophilus (strain ATCC 27634 / DSM 579 / HB8), this protein is Tryptophan synthase beta chain.